A 90-amino-acid chain; its full sequence is Probable Fe(2+)-trafficking protein (90 aa).

It belongs to the Fe(2+)-trafficking protein family.

In terms of biological role, could be a mediator in iron transactions between iron acquisition and iron-requiring processes, such as synthesis and/or repair of Fe-S clusters in biosynthetic enzymes. In Aliivibrio fischeri (strain ATCC 700601 / ES114) (Vibrio fischeri), this protein is Probable Fe(2+)-trafficking protein.